The sequence spans 601 residues: Threonine dehydratase (601 aa).

The N-terminal 51 residues, 1–51 (MEVLCQAPAGNSNFACNPKFTAIRTRAISSNDTFKVISSTGNNKKMKGAIR), are a transit peptide targeting the chloroplast. ACT-like domains lie at 427 to 499 (ALLA…NLTN) and 521 to 592 (IFCQ…IESL).

The protein belongs to the serine/threonine dehydratase family. The cofactor is pyridoxal 5'-phosphate.

The protein resides in the plastid. The protein localises to the chloroplast. It carries out the reaction L-threonine = 2-oxobutanoate + NH4(+). Its pathway is amino-acid biosynthesis; L-isoleucine biosynthesis; 2-oxobutanoate from L-threonine: step 1/1. Its function is as follows. Catalyzes the conversion of threonine to alpha-keto butyrate in isoleucine (Ile) biosynthesis. Required for JA-Ile biosynthesis, a signaling molecule involved in defense and resistance to the herbivore Manduca sexta caterpillars. The chain is Threonine dehydratase from Nicotiana attenuata (Coyote tobacco).